A 1464-amino-acid chain; its full sequence is DNA-directed RNA polymerase subunit beta' (1464 aa).

Mg(2+)-binding residues include Asp541, Asp543, and Asp545. Residues Cys1022, Cys1098, Cys1105, and Cys1108 each contribute to the Zn(2+) site. Positions 1435-1464 (LEDEQQQIIEVDDSDISVEDEENDFYENED) are disordered.

The protein belongs to the RNA polymerase beta' chain family. The RNAP catalytic core consists of 2 alpha, 1 beta, 1 beta' and 1 omega subunit. When a sigma factor is associated with the core the holoenzyme is formed, which can initiate transcription. The cofactor is Mg(2+). Zn(2+) is required as a cofactor.

It carries out the reaction RNA(n) + a ribonucleoside 5'-triphosphate = RNA(n+1) + diphosphate. DNA-dependent RNA polymerase catalyzes the transcription of DNA into RNA using the four ribonucleoside triphosphates as substrates. The chain is DNA-directed RNA polymerase subunit beta' from Metamycoplasma arthritidis (strain 158L3-1) (Mycoplasma arthritidis).